Consider the following 88-residue polypeptide: Platelet factor 4 (88 aa).

T7 carries O-linked (GalNAc...) threonine glycosylation. 2 cysteine pairs are disulfide-bonded: C25–C51 and C27–C67. A Phosphoserine modification is found at S41. 76–82 (KKILKKL) serves as a coordination point for heparin.

It belongs to the intercrine alpha (chemokine CxC) family. Homotetramer. Interacts with TNFAIP6 (via Link domain). Interacts with CCR1. Interacts with CXCR3. Interacts with THBD; this interaction enhances generation of activated protein C. O-linked glycan consists of Gal-GalNAc disaccharide which is modified with sialic acid residues (microheterogeneity).

The protein resides in the secreted. Its function is as follows. Chemokine released during platelet aggregation that plays a role in different biological processes including hematopoiesis, cell proliferation, differentiation, and activation. Acts via different functional receptors including CCR1, CXCR3A or CXCR3B. Upon interaction with CXCR3A receptor, induces activated T-lymphocytes migration mediated via downstream Ras/extracellular signal-regulated kinase (ERK) signaling. Neutralizes the anticoagulant effect of heparin by binding more strongly to heparin than to the chondroitin-4-sulfate chains of the carrier molecule. Plays a role in the inhibition of hematopoiesis and in the maintenance of hematopoietic stem cell (HSC) quiescence. Chemotactic for neutrophils and monocytes via CCR1. Inhibits endothelial cell proliferation. In cooperation with toll-like receptor 8/TLR8, induces chromatin remodeling and activates inflammatory gene expression via the TBK1-IRF5 axis. In addition, induces myofibroblast differentiation and collagen synthesis in different precursor cells, including endothelial cells, by stimulating endothelial-to-mesenchymal transition. Interacts with thrombomodulin/THBD to enhance the activation of protein C and thus potentiates its anticoagulant activity. In Bos taurus (Bovine), this protein is Platelet factor 4 (PF4).